A 58-amino-acid chain; its full sequence is Large ribosomal subunit protein bL32 (58 aa).

Residues 1-15 are compositionally biased toward basic residues; it reads MAVPKKKTSKAKRNQ. A disordered region spans residues 1 to 23; it reads MAVPKKKTSKAKRNQRSATWKGK.

Belongs to the bacterial ribosomal protein bL32 family.

This is Large ribosomal subunit protein bL32 from Synechococcus sp. (strain CC9902).